The following is a 146-amino-acid chain: Snaclec echicetin subunit beta (146 aa).

The first 23 residues, 1-23, serve as a signal peptide directing secretion; that stretch reads MGRFISVSFGLLVLLLSLSGTGA. 3 disulfide bridges follow: Cys25/Cys36, Cys53/Cys142, and Cys119/Cys134. Positions 32-143 constitute a C-type lectin domain; sequence YEGYCYKVFK…CTWTFSFVCK (112 aa).

Belongs to the snaclec family. Heterodimer of subunits alpha and beta; disulfide-linked. As to expression, expressed by the venom gland.

Its subcellular location is the secreted. Binding of echicetin to glycoprotein Ibalpha (GP1BA) receptor on platelets alone results in inhibition of platelet aggregation, while binding to both GPIba receptor and IgMk promotes platelet aggregation and signal transduction. The polypeptide is Snaclec echicetin subunit beta (Echis carinatus (Saw-scaled viper)).